Consider the following 383-residue polypeptide: Probable purine permease 16 (383 aa).

A run of 10 helical transmembrane segments spans residues 30 to 50 (ISVF…MLLL), 72 to 92 (WTQA…FFIL), 113 to 133 (VLSL…LYAL), 138 to 158 (VGWG…SAFI), 166 to 186 (WIII…PAFA), 203 to 223 (LILI…QLGF), 247 to 267 (ICVS…SGEF), 297 to 317 (VWAV…ADVV), 322 to 342 (SPVV…EFGW), and 346 to 363 (GALL…YSLH).

The protein belongs to the purine permeases (TC 2.A.7.14) family.

The protein resides in the membrane. This chain is Probable purine permease 16 (PUP16), found in Arabidopsis thaliana (Mouse-ear cress).